Here is a 747-residue protein sequence, read N- to C-terminus: MTNINYEGIEQMPLRTFTEKAYLNYSMYVIMDRALPFIGDGLKPVQRRIVYAMSELGLNATAKYKKSARTVGDVLGKFHPHGDSACYEAMVLMAQPFSYRYPLVDGQGNWGAPDDPKSFAAMRYTESRLSKISEILLNELGQGTVDYQPNFDGTLAEPQYLPARLPHILLNGTTGIAVGMATDIPPHNINEIADAAVMLLDNPKAGLDDVLEIVQGPDFPTEAEIISPKSEIRKIYEQGRGSIKMRATWKKEDGEIIISALPHQSSPSKVIAQIAEQMTAKKLPMLEDIRDEADHENPIRIVLVPRSNRVDTDALMAHLFATTDLEKSYRVNMNMIGLDHKPAVKGLLEILNEWLDFRRTTVTRRLQYRLDKVLSRLHILEGLMIAFLNIDEVIEIIRHEDDPKAELMARFNLSDEQADAILNLRLRHLAKLEENQLKAEQDELEKERLNLEAILGSERRLNTLIKKEIQEDAKKYANPRMSQLVEREEAKMISESDMTPAEPVTVILSEMGWVRCAKGHDIDPKSLSYKAGDSYLAHACGKSNQAVVFIDSTGRSYALDPLSLPSARSQGEPLTGKLNLPTGATIEYVVMASEQQELLMASDAGYGFICKFEDLIARNKAGKALISLPENAKVLKPKTLINSTALVVAITSAGRMLIFPAQDLPVLSKGKGNKMITIPAANAKDRSELLTKLLLISDQASLEFYSGKRKIVLKPEDLQKFRAERGRKGSTLPRGLHTNLEIMVIEP.

The Topo IIA-type catalytic domain occupies 35–498 (LPFIGDGLKP…EAKMISESDM (464 aa)). Catalysis depends on Tyr-124, which acts as the O-(5'-phospho-DNA)-tyrosine intermediate.

It belongs to the type II topoisomerase GyrA/ParC subunit family. ParC type 1 subfamily. In terms of assembly, heterotetramer composed of ParC and ParE.

Its subcellular location is the cell membrane. It catalyses the reaction ATP-dependent breakage, passage and rejoining of double-stranded DNA.. Functionally, topoisomerase IV is essential for chromosome segregation. It relaxes supercoiled DNA. Performs the decatenation events required during the replication of a circular DNA molecule. The polypeptide is DNA topoisomerase 4 subunit A (Haemophilus influenzae (strain ATCC 51907 / DSM 11121 / KW20 / Rd)).